A 923-amino-acid polypeptide reads, in one-letter code: Mitochondrial 10-formyltetrahydrofolate dehydrogenase (923 aa).

The transit peptide at 1–19 (MLWRGSQALRHFSTSRVYF) directs the protein to the mitochondrion; not cleaved. Positions 23 to 331 (LKLALIGQSL…PASQYFSAGE (309 aa)) are hydrolase domain. Phosphoserine is present on Ser31. An N6-succinyllysine modification is found at Lys60. 110 to 112 (QFI) is a binding site for (6R)-10-formyltetrahydrofolate. The active-site Proton donor is the His128. (6R)-10-formyltetrahydrofolate is bound at residue Asp164. Residues 339-416 (AEELKVAETI…DFIQKVVRRL (78 aa)) form the Carrier domain. At Ser375 the chain carries O-(pantetheine 4'-phosphoryl)serine. Residues 438-923 (TVKIPYQCFI…LKIKTVTLEY (486 aa)) are aldehyde dehydrogenase domain. NADP(+) is bound by residues 592–594 (IPW) and 618–621 (KPAQ). Ser650 is subject to Phosphoserine. NADP(+) is bound by residues 651-656 (GGVAGQ) and 671-672 (GS). N6-succinyllysine is present on Lys681. The Proton acceptor role is filled by Glu694. 694–695 (EL) contributes to the NADP(+) binding site. Cys728 (proton donor) is an active-site residue. Residues Lys778 and 825-827 (ESF) contribute to the NADP(+) site. Lys903 bears the N6-acetyllysine mark.

This sequence in the N-terminal section; belongs to the GART family. It in the C-terminal section; belongs to the aldehyde dehydrogenase family. ALDH1L subfamily. In terms of processing, phosphopantetheinylation at Ser-375 by AASDHPPT is required for the formyltetrahydrofolate dehydrogenase activity.

Its subcellular location is the mitochondrion. It carries out the reaction (6R)-10-formyltetrahydrofolate + NADP(+) + H2O = (6S)-5,6,7,8-tetrahydrofolate + CO2 + NADPH + H(+). Functionally, mitochondrial 10-formyltetrahydrofolate dehydrogenase that catalyzes the NADP(+)-dependent conversion of 10-formyltetrahydrofolate to tetrahydrofolate and carbon dioxide. In Mus musculus (Mouse), this protein is Mitochondrial 10-formyltetrahydrofolate dehydrogenase.